We begin with the raw amino-acid sequence, 174 residues long: Dehydratase AgnL8 (174 aa).

Residues tyrosine 24, tyrosine 44, and phenylalanine 47 each contribute to the substrate site. Active-site residues include histidine 79 and histidine 104.

It belongs to the scytalone dehydratase family. As to quaternary structure, homotrimer. Each subunit contains an active site, located in the central part of the hydrophobic core of the monomer, which functions independently.

It participates in secondary metabolite biosynthesis. In terms of biological role, dehydratase; part of the gene cluster that mediates the biosynthesis of agnestins, dihydroxy-xanthone metabolites. The pathway begins with the assembly and cyclization of atrochrysone thioester by the non-reducing polyketide synthase Agnpks1. The atrochrysone carboxyl ACP thioesterase AgnL7 then breaks the thioester bond and releases the atrochrysone carboxylic acid as the first enzyme-free intermediate. The decarboxylase AgnL1 then catalyzes the concerted decarboxylation-elimination required to convert atochrysone carboxylic acid into emodin anthrone, which is further oxidized to emodin by the anthrone oxygenase AgnL2. Emodin then undergoes reduction catalyzed by the oxidoreductase AgnL4 to yield the dihydroquinone tautomer which is the substrate for reduction by the short chain dehydrogenase AgnL6 reduction to produce hydroxyketone, followed by AgnL8 dehydration and likely spontaneous autoxidation to chrysophanol. Baeyer-Villiger oxidation by the oxidase AgnL3 leads to monodictyphenone via cleavage of the C-10/C-10a bond of chrysophanol. Alternative cleavage at the C-4a/C-10 bond of chrysophanol also leads to the formation some cephalone F. Further conversion to agnestins A and B, requires reduction to dihydro-monodictyphenone, oxidation to agnestin C probably via an epoxide, and rearrangement to either agnestin A or agnestin B directly, although agnestin A or agnestin B can also interconvert. Within the cluster, AgnR1 is the only unassigned oxidoreductase present which could be involved in this conversion. However, AgnR1 seems not to be involved in this step, and thus genes involved in the proposed oxidation/reduction may be located elsewhere on the genome. Further agnestin A derivatives are probably formed by spontaneous decarboxylations, dehydrations and methanolysis reactions. The sequence is that of Dehydratase AgnL8 from Paecilomyces divaricatus (Penicillium divaricatum).